The sequence spans 389 residues: Na(+)/H(+) antiporter NhaA (389 aa).

The next 11 helical transmembrane spans lie at alanine 14–leucine 34, leucine 59–valine 79, serine 95–phenylalanine 115, alanine 124–leucine 144, valine 154–phenylalanine 174, threonine 177–leucine 197, leucine 213–isoleucine 233, proline 257–glycine 277, isoleucine 292–valine 312, isoleucine 328–leucine 348, and leucine 363–valine 383.

The protein belongs to the NhaA Na(+)/H(+) (TC 2.A.33) antiporter family.

Its subcellular location is the cell inner membrane. It carries out the reaction Na(+)(in) + 2 H(+)(out) = Na(+)(out) + 2 H(+)(in). Its function is as follows. Na(+)/H(+) antiporter that extrudes sodium in exchange for external protons. This Shewanella baltica (strain OS195) protein is Na(+)/H(+) antiporter NhaA.